The following is a 521-amino-acid chain: MASALADAMTSSGRDLVVLDHGGWRRHPWAEVHQRAENIAARITEDAATVVVLVGEPTVEFIAAIPGTLYAGAALSILPGPVRGADLGQWARNTMQRCASIGVRLVFSHGEHLDALRATPASIPTCDVTETGHARRDSSFTPPDHGEFAVLQGTAGSTGIPRTAQLSPEAVLANLRGLVACIDITPADTGCSWLPLYHDMGLAFLLTNALGGAELWQAPTTAFSASPFSWLQWMTESTATLTAAPNMAYGLIGKYGSRLTDFDLGALRFALNGGEPVDCQGYRRFATEMARFGLDPSALVPAYGLAESSCAVTVPILGSGLQVDEVQVSSDDGRFIRTHAVVGEPIPGMQVRIAPTDGSGEQVDGRDFGEIEVRGTSLMSGYLGEPPLEAGSWFPTGDLGYFVDSGLVVCGRAKELITVAGRNIFPAEVERVAAQVQGVREGAVVAVGTDESAVRPGLVIAAEFRGTDEPAARTELVQRVASECGVVPSNVVFLEPGALPRTSSGKLRRLEVKRSMEDVNR.

The protein belongs to the ATP-dependent AMP-binding enzyme family.

The enzyme catalyses a long-chain fatty acid + holo-[ACP] + ATP = a long-chain fatty acyl-[ACP] + AMP + diphosphate. It carries out the reaction a medium-chain fatty acid + holo-[ACP] + ATP = a medium-chain fatty acyl-[ACP] + AMP + diphosphate. It participates in siderophore biosynthesis; mycobactin biosynthesis. Its function is as follows. Activates lipidic moieties required for mycobactin biosynthesis. Converts medium- to long-chain aliphatic fatty acids into acyl adenylate, which is further transferred on to the phosphopantetheine arm of the carrier protein MbtL. In Mycobacterium sp. (strain MCS), this protein is Medium/long-chain-fatty-acid--[acyl-carrier-protein] ligase MbtM (mbtM).